The primary structure comprises 550 residues: Warthog protein 8 (550 aa).

An N-terminal signal peptide occupies residues 1–19 (MNYLLLVSGLLSVWQPVFG).

This sequence belongs to the hedgehog family. In terms of processing, the C-terminal domain displays an autoproteolysis activity.

The protein resides in the secreted. Its subcellular location is the cell surface. It localises to the cell membrane. The protein localises to the extracellular space. Its function is as follows. Intercellular signal essential for a variety of patterning events during development. The polypeptide is Warthog protein 8 (wrt-8) (Caenorhabditis elegans).